We begin with the raw amino-acid sequence, 368 residues long: MSTTGQVIRCKAAILWKPGAPFSIEEVEVAPPKAKEVRIKVVATGLCGTEMKVLGSKHLDLLYPTILGHEGAGIVESIGEGVSTVKPGDKVITLFLPQCGECTSCLNSEGNFCIQFKQSKTQLMSDGTSRFTCKGKSIYHFGNTSTFCEYTVIKEISVAKIDAVAPLEKVCLISCGFSTGFGAAINTAKVTPGSTCAVFGLGGVGLSVVMGCKAAGAARIIGVDVNKEKFKKAQELGATECLNPQDLKKPIQEVLFDMTDAGIDFCFEAIGNLDVLAAALASCNESYGVCVVVGVLPASVQLKISGQLFFSGRSLKGSVFGGWKSRQHIPKLVADYMAEKLNLDPLITHTLNLDKINEAVELMKTGKW.

A Phosphoserine modification is found at Ser-23. Cys-47, His-69, Cys-99, Cys-102, Cys-105, Cys-113, and Cys-175 together coordinate Zn(2+). Residues 200–205 (GLGGVG), Asp-224, Lys-229, and 293–295 (VGV) each bind NAD(+).

The protein belongs to the zinc-containing alcohol dehydrogenase family. Class-V subfamily. In terms of assembly, dimer. The cofactor is Zn(2+). As to expression, stomach and liver.

It localises to the cytoplasm. The enzyme catalyses a primary alcohol + NAD(+) = an aldehyde + NADH + H(+). It carries out the reaction a secondary alcohol + NAD(+) = a ketone + NADH + H(+). Its activity is regulated as follows. Inhibited partially by pyrazole (10 mM) in the reaction mixture containing 100 mM ethanol at pH 10.0. In terms of biological role, alcohol dehydrogenase. Catalyzes the NAD-dependent oxidation of primary alcohols to the corresponding aldehydes. Oxidizes secondary alcohols to the corresponding ketones. This chain is Alcohol dehydrogenase 6 (ADH6), found in Homo sapiens (Human).